The following is a 476-amino-acid chain: Probable cytosol aminopeptidase (476 aa).

Positions 242 and 247 each coordinate Mn(2+). K254 is an active-site residue. Mn(2+)-binding residues include D265, D324, and E326. Residue R328 is part of the active site.

It belongs to the peptidase M17 family. Mn(2+) is required as a cofactor.

It localises to the cytoplasm. The enzyme catalyses Release of an N-terminal amino acid, Xaa-|-Yaa-, in which Xaa is preferably Leu, but may be other amino acids including Pro although not Arg or Lys, and Yaa may be Pro. Amino acid amides and methyl esters are also readily hydrolyzed, but rates on arylamides are exceedingly low.. It carries out the reaction Release of an N-terminal amino acid, preferentially leucine, but not glutamic or aspartic acids.. Presumably involved in the processing and regular turnover of intracellular proteins. Catalyzes the removal of unsubstituted N-terminal amino acids from various peptides. In Treponema denticola (strain ATCC 35405 / DSM 14222 / CIP 103919 / JCM 8153 / KCTC 15104), this protein is Probable cytosol aminopeptidase.